The chain runs to 293 residues: Probable porphobilinogen deaminase (293 aa).

At C233 the chain carries S-(dipyrrolylmethanemethyl)cysteine.

It belongs to the HMBS family. Dipyrromethane is required as a cofactor.

The enzyme catalyses 4 porphobilinogen + H2O = hydroxymethylbilane + 4 NH4(+). It participates in porphyrin-containing compound metabolism; protoporphyrin-IX biosynthesis; coproporphyrinogen-III from 5-aminolevulinate: step 2/4. Tetrapolymerization of the monopyrrole PBG into the hydroxymethylbilane pre-uroporphyrinogen in several discrete steps. This is Probable porphobilinogen deaminase from Saccharolobus islandicus (strain Y.N.15.51 / Yellowstone #2) (Sulfolobus islandicus).